The chain runs to 207 residues: N-(5'-phosphoribosyl)anthranilate isomerase (207 aa).

This sequence belongs to the TrpF family.

It carries out the reaction N-(5-phospho-beta-D-ribosyl)anthranilate = 1-(2-carboxyphenylamino)-1-deoxy-D-ribulose 5-phosphate. It participates in amino-acid biosynthesis; L-tryptophan biosynthesis; L-tryptophan from chorismate: step 3/5. The sequence is that of N-(5'-phosphoribosyl)anthranilate isomerase from Petrotoga mobilis (strain DSM 10674 / SJ95).